The primary structure comprises 173 residues: MDIAIQHPWFKRALGPFYPNRLFDQVFGEGMFDYDLFPFLSSTVSPYYRHSLFRGFMDSGISEVRSDRDRFTINLDVKHFSPDDLTVKILDDFVEIHGKHSERQDDHGYISREFHRRYRLPSNLDQSSISCSLSADGILTFSGPKMMSGLDSSHSERPIPVSREEKPTSAPSS.

Met-1 carries the post-translational modification N-acetylmethionine. In terms of domain architecture, sHSP spans 52–162; the sequence is LFRGFMDSGI…SHSERPIPVS (111 aa). His-100, Glu-102, His-107, and His-154 together coordinate Zn(2+). Positions 146–173 are disordered; the sequence is MMSGLDSSHSERPIPVSREEKPTSAPSS. A compositionally biased stretch (basic and acidic residues) spans 153–167; the sequence is SHSERPIPVSREEKP.

Belongs to the small heat shock protein (HSP20) family. In terms of assembly, heteropolymer composed of three CRYAA and one CRYAB subunits. Inter-subunit bridging via zinc ions enhances stability, which is crucial as there is no protein turn over in the lens. Can also form homodimers and homotetramers (dimers of dimers) which serve as the building blocks of homooligomers. Within homooligomers, the zinc-binding motif is created from residues of 3 different molecules. His-100 and Glu-102 from one molecule are ligands of the zinc ion, and His-107 and His-154 residues from additional molecules complete the site with tetrahedral coordination geometry.

It is found in the cytoplasm. The protein resides in the nucleus. Contributes to the transparency and refractive index of the lens. May act as a chaperone, preventing aggregation of various proteins under a wide range of stress conditions. The chain is Alpha-crystallin A chain (CRYAA) from Aquarana catesbeiana (American bullfrog).